The sequence spans 260 residues: tRNA pseudouridine synthase C (260 aa).

The active site involves D54.

It belongs to the pseudouridine synthase RluA family.

It catalyses the reaction uridine(65) in tRNA = pseudouridine(65) in tRNA. Functionally, responsible for synthesis of pseudouridine from uracil-65 in transfer RNAs. The chain is tRNA pseudouridine synthase C (truC) from Salmonella typhimurium (strain LT2 / SGSC1412 / ATCC 700720).